We begin with the raw amino-acid sequence, 499 residues long: Cytochrome P450 81Q32 (499 aa).

A helical membrane pass occupies residues 5 to 25 (TLLYTFLAVVLLSISLKLFPV). N-linked (GlcNAc...) asparagine glycans are attached at residues Asn-112, Asn-183, and Asn-266. Residue Cys-434 coordinates heme.

This sequence belongs to the cytochrome P450 family. In terms of tissue distribution, expressed in leaf epidermis and in the leaf internal phloem-associated parenchyma (IPAP) inside the mesophyll.

Its subcellular location is the membrane. The chain is Cytochrome P450 81Q32 from Catharanthus roseus (Madagascar periwinkle).